We begin with the raw amino-acid sequence, 408 residues long: GTPase Obg (408 aa).

Residues 1–159 (MKFVDEVSIR…RDLKMEMKVL (159 aa)) form the Obg domain. Positions 127–148 (NTRFKSSTNRAPRQTTPGKPGE) are disordered. The segment covering 129–143 (RFKSSTNRAPRQTTP) has biased composition (polar residues). Residues 160–333 (ADVGLLGLPN…LSHDLMRYLE (174 aa)) enclose the OBG-type G domain. GTP-binding positions include 166–173 (GLPNAGKS), 191–195 (FTTLV), 213–216 (DIPG), 283–286 (NKAD), and 314–316 (SAI). Positions 173 and 193 each coordinate Mg(2+). The span at 385 to 401 (GDDDGWDDDFEDDEDGP) shows a compositional bias: acidic residues. A disordered region spans residues 385–408 (GDDDGWDDDFEDDEDGPEIIYVRD).

Belongs to the TRAFAC class OBG-HflX-like GTPase superfamily. OBG GTPase family. Monomer. It depends on Mg(2+) as a cofactor.

The protein resides in the cytoplasm. An essential GTPase which binds GTP, GDP and possibly (p)ppGpp with moderate affinity, with high nucleotide exchange rates and a fairly low GTP hydrolysis rate. Plays a role in control of the cell cycle, stress response, ribosome biogenesis and in those bacteria that undergo differentiation, in morphogenesis control. This is GTPase Obg from Pseudomonas putida (strain ATCC 700007 / DSM 6899 / JCM 31910 / BCRC 17059 / LMG 24140 / F1).